The primary structure comprises 195 residues: FMN-dependent NADH:quinone oxidoreductase (195 aa).

Residues serine 10, 16–18 (SQS), 91–94 (MYNF), and 135–138 (TRGG) each bind FMN.

This sequence belongs to the azoreductase type 1 family. Homodimer. FMN is required as a cofactor.

It carries out the reaction 2 a quinone + NADH + H(+) = 2 a 1,4-benzosemiquinone + NAD(+). The catalysed reaction is N,N-dimethyl-1,4-phenylenediamine + anthranilate + 2 NAD(+) = 2-(4-dimethylaminophenyl)diazenylbenzoate + 2 NADH + 2 H(+). Quinone reductase that provides resistance to thiol-specific stress caused by electrophilic quinones. Its function is as follows. Also exhibits azoreductase activity. Catalyzes the reductive cleavage of the azo bond in aromatic azo compounds to the corresponding amines. The polypeptide is FMN-dependent NADH:quinone oxidoreductase (Vibrio vulnificus (strain YJ016)).